The following is a 335-amino-acid chain: Pregnancy-specific beta-1-glycoprotein 2 (335 aa).

A signal peptide spans 1 to 34; the sequence is MGPLSAPPCTEHIKWKGLLVTASLLNFWNLPTTA. An Ig-like V-type domain is found at 35–144; the sequence is QVTIEAQPPK…TGYFTFTLYL (110 aa). Residues Asn-61, Asn-104, Asn-111, and Asn-199 are each glycosylated (N-linked (GlcNAc...) asparagine). 2 consecutive Ig-like C2-type domains span residues 147–234 and 239–317; these read PKPS…VTLN and PDLP…TSLT. Intrachain disulfides connect Cys-169/Cys-217 and Cys-261/Cys-301.

The protein belongs to the immunoglobulin superfamily. CEA family.

Its subcellular location is the secreted. In Homo sapiens (Human), this protein is Pregnancy-specific beta-1-glycoprotein 2 (PSG2).